Reading from the N-terminus, the 490-residue chain is MASNGHTLRLVINRDKHDSVIRGLYLVTDHDDNLIPRVEAAIDGGARVVQYRNKNQDRESRLALGLELRELCRRRSIPFIVNDDLEMAVSLKADGLHLGQGDGDPREARRVLGPGKIIGVSTHTLSEALEAQAAGVDYIGLGAMFPSRSKEVEHVAGSELLAAIRSSISIPIVAIGGITRDNGASVIDAGADAVAVISAVLSHPDPALAATEIALLFNRRAPFPRGSVLTVAGSDSGGGAGIQADLKTVTLLGSYGSSVLTALTAQNTRGVSGIHGVPPAFVADQLDAVFSDIPVDVVKTGMLFSAETIVAIAAKLTEYRRRMVVVDPVMVAKGGANLIDRGAVSVLKERLFPLAYLVTPNIPEAERLTGANISDEESMREAARRLHRLGARNVLLKGGHLLAGDSVDILFDGAAFHRFVSPRILSKNTHGTGCTFASAIATYLAQGDPLREAIARAKRYITAAIRLAQPLGRGHGPVNHILAAEDVRDR.

The thiamine-phosphate synthase stretch occupies residues 1-213 (MASNGHTLRL…PDPALAATEI (213 aa)). Residues 50–54 (QYRNK) and asparagine 82 contribute to the 4-amino-2-methyl-5-(diphosphooxymethyl)pyrimidine site. 2 residues coordinate Mg(2+): aspartate 83 and aspartate 102. Serine 121 is a binding site for 4-amino-2-methyl-5-(diphosphooxymethyl)pyrimidine. 2-[(2R,5Z)-2-carboxy-4-methylthiazol-5(2H)-ylidene]ethyl phosphate is bound at residue 147 to 149 (SRS). 4-amino-2-methyl-5-(diphosphooxymethyl)pyrimidine is bound at residue lysine 150. 2-[(2R,5Z)-2-carboxy-4-methylthiazol-5(2H)-ylidene]ethyl phosphate-binding positions include glycine 177 and 197 to 198 (IS). A hydroxymethylpyrimidine/phosphomethylpyrimidine kinase region spans residues 229 to 490 (LTVAGSDSGG…ILAAEDVRDR (262 aa)). Glutamine 266 provides a ligand contact to 4-amino-5-hydroxymethyl-2-methylpyrimidine.

The protein in the N-terminal section; belongs to the thiamine-phosphate synthase family. In the C-terminal section; belongs to the ThiD family. Mg(2+) serves as cofactor.

It catalyses the reaction 2-[(2R,5Z)-2-carboxy-4-methylthiazol-5(2H)-ylidene]ethyl phosphate + 4-amino-2-methyl-5-(diphosphooxymethyl)pyrimidine + 2 H(+) = thiamine phosphate + CO2 + diphosphate. The enzyme catalyses 2-(2-carboxy-4-methylthiazol-5-yl)ethyl phosphate + 4-amino-2-methyl-5-(diphosphooxymethyl)pyrimidine + 2 H(+) = thiamine phosphate + CO2 + diphosphate. It carries out the reaction 4-methyl-5-(2-phosphooxyethyl)-thiazole + 4-amino-2-methyl-5-(diphosphooxymethyl)pyrimidine + H(+) = thiamine phosphate + diphosphate. The catalysed reaction is 4-amino-5-hydroxymethyl-2-methylpyrimidine + ATP = 4-amino-2-methyl-5-(phosphooxymethyl)pyrimidine + ADP + H(+). It catalyses the reaction 4-amino-2-methyl-5-(phosphooxymethyl)pyrimidine + ATP = 4-amino-2-methyl-5-(diphosphooxymethyl)pyrimidine + ADP. Its pathway is cofactor biosynthesis; thiamine diphosphate biosynthesis; 4-amino-2-methyl-5-diphosphomethylpyrimidine from 5-amino-1-(5-phospho-D-ribosyl)imidazole: step 3/3. It participates in cofactor biosynthesis; thiamine diphosphate biosynthesis; thiamine phosphate from 4-amino-2-methyl-5-diphosphomethylpyrimidine and 4-methyl-5-(2-phosphoethyl)-thiazole: step 1/1. Functionally, condenses 4-methyl-5-(beta-hydroxyethyl)thiazole monophosphate (THZ-P) and 2-methyl-4-amino-5-hydroxymethyl pyrimidine pyrophosphate (HMP-PP) to form thiamine monophosphate (TMP). Catalyzes the phosphorylation of hydroxymethylpyrimidine phosphate (HMP-P) to HMP-PP, and of HMP to HMP-P. The sequence is that of Thiamine biosynthesis bifunctional protein ThiED (thiDE) from Geobacter sulfurreducens (strain ATCC 51573 / DSM 12127 / PCA).